The chain runs to 298 residues: Acetyl-coenzyme A carboxylase carboxyl transferase subunit beta (298 aa).

The tract at residues 1–21 is disordered; that stretch reads MNQEVKSGKVLSPSTPWTQRP. The 258-residue stretch at 41-298 folds into the CoA carboxyltransferase N-terminal domain; the sequence is PTIECPECHA…RLVSKLMNLP (258 aa). Positions 45, 48, 64, and 67 each coordinate Zn(2+). The segment at 45–67 adopts a C4-type zinc-finger fold; sequence CPECHALVTRTAISFNAYVCPQC.

The protein belongs to the AccD/PCCB family. Acetyl-CoA carboxylase is a heterohexamer composed of biotin carboxyl carrier protein (AccB), biotin carboxylase (AccC) and two subunits each of ACCase subunit alpha (AccA) and ACCase subunit beta (AccD). Zn(2+) serves as cofactor.

The protein resides in the cytoplasm. It catalyses the reaction N(6)-carboxybiotinyl-L-lysyl-[protein] + acetyl-CoA = N(6)-biotinyl-L-lysyl-[protein] + malonyl-CoA. It functions in the pathway lipid metabolism; malonyl-CoA biosynthesis; malonyl-CoA from acetyl-CoA: step 1/1. Component of the acetyl coenzyme A carboxylase (ACC) complex. Biotin carboxylase (BC) catalyzes the carboxylation of biotin on its carrier protein (BCCP) and then the CO(2) group is transferred by the transcarboxylase to acetyl-CoA to form malonyl-CoA. The chain is Acetyl-coenzyme A carboxylase carboxyl transferase subunit beta from Acinetobacter baumannii (strain AYE).